Reading from the N-terminus, the 558-residue chain is Factor VII-activating protease (558 aa).

Positions 1 to 23 (MSVVMLVFRVLLLIALVGNSAIG) are cleaved as a signal peptide. 3 consecutive EGF-like domains span residues 71–107 (DDDP…SRCQ), 109–146 (VQNK…PDCS), and 148–186 (VLPV…RFCE). 18 disulfide bridges follow: cysteine 75/cysteine 86, cysteine 80/cysteine 95, cysteine 97/cysteine 106, cysteine 113/cysteine 123, cysteine 118/cysteine 134, cysteine 136/cysteine 145, cysteine 152/cysteine 163, cysteine 157/cysteine 174, cysteine 176/cysteine 185, cysteine 192/cysteine 274, cysteine 213/cysteine 255, cysteine 244/cysteine 269, cysteine 299/cysteine 433, cysteine 345/cysteine 361, cysteine 353/cysteine 422, cysteine 445/cysteine 513, cysteine 475/cysteine 491, and cysteine 503/cysteine 531. The region spanning 191 to 274 (DCYVGDGYSY…KWEYCNVEVC (84 aa)) is the Kringle domain. A Peptidase S1 domain is found at 312–553 (IYGGFKSTAG…FLNWIKTTMH (242 aa)). Active-site charge relay system residues include histidine 360 and aspartate 409. The active-site Charge relay system is serine 507.

This sequence belongs to the peptidase S1 family. Heterodimer; disulfide-linked. Heterodimer of a 50 kDa heavy and a 27 kDa light chain linked by a disulfide bond. Proteolytic cleavage at Gly-23 or Met-27 can give rise to the 50 kDa heavy chain (HC) and cleavage at Arg-311 or Lys-317 can give rise to the 27 kDa light chain (LC). The HC can undergo further proteolytic cleavage giving rise to a 26 kDa fragment. The LC can undergo further proteolytic cleavage at Arg-311 leading to a 17-kDa fragment and at Arg-478 leading to a 8-kDa fragment.

The protein localises to the secreted. Its function is as follows. Cleaves the alpha-chain at multiple sites and the beta-chain between 'Lys-53' and 'Lys-54' but not the gamma-chain of fibrinogen and therefore does not initiate the formation of the fibrin clot and does not cause the fibrinolysis directly. It does not cleave (activate) prothrombin and plasminogen but converts the inactive single chain urinary plasminogen activator (pro-urokinase) to the active two chain form. Activates coagulation factor VII. May function as a tumor suppressor negatively regulating cell proliferation and cell migration. The protein is Factor VII-activating protease of Rattus norvegicus (Rat).